The following is a 148-amino-acid chain: Putative lysozyme C-2 (148 aa).

A signal peptide spans 1 to 18 (MKALLVLGFLLLSASVQA). The C-type lysozyme domain occupies 19-148 (KVFKHCELAR…LSGYIRNCGV (130 aa)). Intrachain disulfides connect C24/C146, C48/C134, C83/C99, and C95/C113. Residues E53 and D71 contribute to the active site.

The protein belongs to the glycosyl hydrolase 22 family. As to quaternary structure, monomer.

The protein resides in the secreted. It carries out the reaction Hydrolysis of (1-&gt;4)-beta-linkages between N-acetylmuramic acid and N-acetyl-D-glucosamine residues in a peptidoglycan and between N-acetyl-D-glucosamine residues in chitodextrins.. Its function is as follows. Lysozymes have primarily a bacteriolytic function; those in tissues and body fluids are associated with the monocyte-macrophage system and enhance the activity of immunoagents. In the intestine they may also have a digestive function. In Rattus norvegicus (Rat), this protein is Putative lysozyme C-2 (Lyz2).